The sequence spans 639 residues: MAU2 chromatid cohesion factor homolog (639 aa).

TPR repeat units lie at residues 453-486 and 493-526; these read GGFYYVQGLHAFHKNSFHEAKRFLRETLKMANAE and SCSLVLLSHVFLSIGNSKESMNMVTPAMQLASKI.

Belongs to the SCC4/mau-2 family. Interacts with Nipped-B to form the cohesin loading complex.

It is found in the nucleus. The protein resides in the nucleoplasm. Functionally, required for association of the cohesin complex with chromatin during interphase. Plays a role in sister chromatid cohesion and normal progression through prometaphase. In Drosophila ananassae (Fruit fly), this protein is MAU2 chromatid cohesion factor homolog.